The following is a 218-amino-acid chain: Carboxylesterase 2 (218 aa).

Catalysis depends on charge relay system residues serine 114, aspartate 168, and histidine 199.

The protein belongs to the AB hydrolase superfamily. AB hydrolase 2 family. Homodimer.

It carries out the reaction a carboxylic ester + H2O = an alcohol + a carboxylate + H(+). Functionally, hydrolyzes carboxylic ester bonds with relatively broad substrate specificity. The polypeptide is Carboxylesterase 2 (estB) (Pseudomonas fluorescens).